We begin with the raw amino-acid sequence, 133 residues long: Ribosome-binding factor A (133 aa).

Belongs to the RbfA family. In terms of assembly, monomer. Binds 30S ribosomal subunits, but not 50S ribosomal subunits or 70S ribosomes.

The protein resides in the cytoplasm. Functionally, one of several proteins that assist in the late maturation steps of the functional core of the 30S ribosomal subunit. Associates with free 30S ribosomal subunits (but not with 30S subunits that are part of 70S ribosomes or polysomes). Required for efficient processing of 16S rRNA. May interact with the 5'-terminal helix region of 16S rRNA. The polypeptide is Ribosome-binding factor A (Proteus mirabilis (strain HI4320)).